The chain runs to 210 residues: MPNLLVLVRHGQSEWNKKNLFTGWRDPGLTEQGMEEAREAGQAIKAKGLVFDVAYTSALSRAQETNRIVLEELGQGDIEIIENEALNERDYGDLSGLNKDDAREKWGEEQVHIWRRSYDIPPPGGESLKMTAERVLPYFEKEILPRVLKGERVLIAAHGNSLRSLVMQLDKLSQEQVLALNIATGAPIVYELDDKGGVVRKEMLIEREAH.

Residues 9-16 (RHGQSEWN), 22-23 (TG), Arg61, 88-91 (ERDY), Lys99, 115-116 (RR), and 159-160 (GN) contribute to the substrate site. His10 serves as the catalytic Tele-phosphohistidine intermediate. Catalysis depends on Glu88, which acts as the Proton donor/acceptor.

This sequence belongs to the phosphoglycerate mutase family. BPG-dependent PGAM subfamily. As to quaternary structure, homodimer.

It catalyses the reaction (2R)-2-phosphoglycerate = (2R)-3-phosphoglycerate. Its pathway is carbohydrate degradation; glycolysis; pyruvate from D-glyceraldehyde 3-phosphate: step 3/5. Catalyzes the interconversion of 2-phosphoglycerate and 3-phosphoglycerate. The chain is 2,3-bisphosphoglycerate-dependent phosphoglycerate mutase from Parvibaculum lavamentivorans (strain DS-1 / DSM 13023 / NCIMB 13966).